Reading from the N-terminus, the 247-residue chain is Chloride intracellular channel protein 2 (247 aa).

The interval M1 to L94 is N-terminal. The required for insertion into the membrane stretch occupies residues M1 to P96. E25 serves as a coordination point for glutathione. Residues C30 to C33 carry the G-site motif. A disulfide bridge connects residues C30 and C33. Residues F32–V52 traverse the membrane as a helical segment. Positions N76–Y239 constitute a GST C-terminal domain. The interval A95–Y106 is joint loop. Residues K107 to S247 are C-terminal. The tract at residues N151–R171 is foot loop. H227 contributes to the glutathione binding site.

This sequence belongs to the chloride channel CLIC family. In terms of assembly, monomer. Interacts with TRAPPC2 and RYR2. As to expression, expressed in adult and fetal brain, heart, skeletal muscle, liver, lung, and spleen. Detected in adult stomach and testis. Expressed in fetal thymus and kidney.

Its subcellular location is the cytoplasm. The protein resides in the membrane. It catalyses the reaction chloride(in) = chloride(out). The enzyme catalyses tert-butyl hydroperoxide + 2 glutathione = tert-butanol + glutathione disulfide + H2O. The catalysed reaction is cumene hydroperoxide + 2 glutathione = 2-phenylpropan-2-ol + glutathione disulfide + H2O. Its activity is regulated as follows. The channel conductance is regulated by pH. In the soluble state, catalyzes glutaredoxin-like thiol disulfide exchange reactions with reduced glutathione as electron donor. Displays weak glutathione peroxidase activity. Can insert into membranes and form chloride ion channels. Membrane insertion seems to be redox-regulated and may occur only under oxidizing conditions. Modulates the activity of RYR2 and inhibits calcium influx. This Homo sapiens (Human) protein is Chloride intracellular channel protein 2.